A 135-amino-acid chain; its full sequence is Mediator of RNA polymerase II transcription subunit 10 (135 aa).

It belongs to the Mediator complex subunit 10 family. Component of the Mediator complex, which is composed of MED1, MED4, MED6, MED7, MED8, MED9, MED10, MED11, MED12, MED13, MED13L, MED14, MED15, MED16, MED17, MED18, MED19, MED20, MED21, MED22, MED23, MED24, MED25, MED26, MED27, MED29, MED30, MED31, CCNC, CDK8 and CDC2L6/CDK11. The MED12, MED13, CCNC and CDK8 subunits form a distinct module termed the CDK8 module. Mediator containing the CDK8 module is less active than Mediator lacking this module in supporting transcriptional activation. Individual preparations of the Mediator complex lacking one or more distinct subunits have been variously termed ARC, CRSP, DRIP, PC2, SMCC and TRAP.

The protein localises to the nucleus. Its function is as follows. Component of the Mediator complex, a coactivator involved in the regulated transcription of nearly all RNA polymerase II-dependent genes. Mediator functions as a bridge to convey information from gene-specific regulatory proteins to the basal RNA polymerase II transcription machinery. Mediator is recruited to promoters by direct interactions with regulatory proteins and serves as a scaffold for the assembly of a functional preinitiation complex with RNA polymerase II and the general transcription factors. The chain is Mediator of RNA polymerase II transcription subunit 10 (Med10) from Mus musculus (Mouse).